The primary structure comprises 306 residues: Curved DNA-binding protein (306 aa).

Positions 5–69 constitute a J domain; the sequence is DYYAIMGVKP…QRRAEYDQMW (65 aa).

It is found in the cytoplasm. The protein resides in the nucleoid. DNA-binding protein that preferentially recognizes a curved DNA sequence. It is probably a functional analog of DnaJ; displays overlapping activities with DnaJ, but functions under different conditions, probably acting as a molecular chaperone in an adaptive response to environmental stresses other than heat shock. Lacks autonomous chaperone activity; binds native substrates and targets them for recognition by DnaK. Its activity is inhibited by the binding of CbpM. This chain is Curved DNA-binding protein, found in Escherichia coli (strain SMS-3-5 / SECEC).